A 392-amino-acid polypeptide reads, in one-letter code: FK506-binding protein 4 (392 aa).

Disordered stretches follow at residues 58 to 116 (NPEL…NEID) and 161 to 284 (GNYV…PKTK). 3 stretches are compositionally biased toward acidic residues: residues 73 to 86 (DGLE…EQEA), 104 to 116 (SESE…NEID), and 172 to 219 (SDSD…DASD). A phosphoserine mark is found at Ser-80 and Ser-82. 2 stretches are compositionally biased toward basic and acidic residues: residues 220–234 (IESR…DEKK) and 252–279 (SAKP…ESKP). Residues 306–392 (GTRVGMRYVG…TFDVKLVSMK (87 aa)) enclose the PPIase FKBP-type domain.

This sequence belongs to the FKBP-type PPIase family. FKBP3/4 subfamily. In terms of assembly, binds to histones H3 and H4. Interacts with NOP53.

The protein localises to the nucleus. It carries out the reaction [protein]-peptidylproline (omega=180) = [protein]-peptidylproline (omega=0). Functionally, PPIase that acts as a histone chaperone. Histone proline isomerase that increases the rate of cis-trans isomerization at 'Pro-17' (H3P16), 'Pro-31' (H3P30) and 'Pro-39 (H3P38) on the histone H3 N-terminal tail. H3P16 and H3P30 are the major proline targets with little activity shown against H3P38. H3P38 isomerization influences SET2-mediated H3K36 methylation thereby regulating gene expression. This Saccharomyces cerevisiae (strain ATCC 204508 / S288c) (Baker's yeast) protein is FK506-binding protein 4.